Here is a 300-residue protein sequence, read N- to C-terminus: Ribosomal protein L11 methyltransferase (300 aa).

S-adenosyl-L-methionine is bound by residues T152, G173, D195, and N234.

Belongs to the methyltransferase superfamily. PrmA family.

The protein localises to the cytoplasm. It catalyses the reaction L-lysyl-[protein] + 3 S-adenosyl-L-methionine = N(6),N(6),N(6)-trimethyl-L-lysyl-[protein] + 3 S-adenosyl-L-homocysteine + 3 H(+). In terms of biological role, methylates ribosomal protein L11. The protein is Ribosomal protein L11 methyltransferase of Burkholderia lata (strain ATCC 17760 / DSM 23089 / LMG 22485 / NCIMB 9086 / R18194 / 383).